The following is a 414-amino-acid chain: Nuclear hormone receptor family member nhr-213 (414 aa).

Positions 21–99 form a DNA-binding region, nuclear receptor; the sequence is IVLCKVCALS…LGMTPENVQF (79 aa). 2 consecutive NR C4-type zinc fingers follow at residues 24–44 and 62–82; these read CKVC…CRAC and CKKG…CRLC. In terms of domain architecture, NR LBD spans 162–414; that stretch reads SAAKKMNSLE…DFSDPDIFDC (253 aa).

The protein belongs to the nuclear hormone receptor family.

The protein resides in the nucleus. Orphan nuclear receptor. This Caenorhabditis elegans protein is Nuclear hormone receptor family member nhr-213 (nhr-213).